The sequence spans 106 residues: ATP-dependent Clp protease adapter protein ClpS (106 aa).

Belongs to the ClpS family. In terms of assembly, binds to the N-terminal domain of the chaperone ClpA.

Its function is as follows. Involved in the modulation of the specificity of the ClpAP-mediated ATP-dependent protein degradation. The sequence is that of ATP-dependent Clp protease adapter protein ClpS from Vibrio vulnificus (strain CMCP6).